Consider the following 334-residue polypeptide: Glyceraldehyde-3-phosphate dehydrogenase (334 aa).

Residues 11-12, aspartate 33, and serine 119 contribute to the NAD(+) site; that span reads RI. D-glyceraldehyde 3-phosphate-binding positions include 149 to 151 and threonine 180; that span reads SCT. Cysteine 150 acts as the Nucleophile in catalysis. Asparagine 181 lines the NAD(+) pocket. D-glyceraldehyde 3-phosphate contacts are provided by residues arginine 197, 210 to 211, and arginine 233; that span reads TG. Asparagine 314 contributes to the NAD(+) binding site.

Belongs to the glyceraldehyde-3-phosphate dehydrogenase family. In terms of assembly, homotetramer.

It is found in the cytoplasm. It carries out the reaction D-glyceraldehyde 3-phosphate + phosphate + NAD(+) = (2R)-3-phospho-glyceroyl phosphate + NADH + H(+). The protein operates within carbohydrate degradation; glycolysis; pyruvate from D-glyceraldehyde 3-phosphate: step 1/5. In terms of biological role, catalyzes the oxidative phosphorylation of glyceraldehyde 3-phosphate (G3P) to 1,3-bisphosphoglycerate (BPG) using the cofactor NAD. The first reaction step involves the formation of a hemiacetal intermediate between G3P and a cysteine residue, and this hemiacetal intermediate is then oxidized to a thioester, with concomitant reduction of NAD to NADH. The reduced NADH is then exchanged with the second NAD, and the thioester is attacked by a nucleophilic inorganic phosphate to produce BPG. This chain is Glyceraldehyde-3-phosphate dehydrogenase (gap), found in Clostridium acetobutylicum (strain ATCC 824 / DSM 792 / JCM 1419 / IAM 19013 / LMG 5710 / NBRC 13948 / NRRL B-527 / VKM B-1787 / 2291 / W).